The chain runs to 224 residues: MTTCLIVDDDPKILEYVSKYIEREHFETIVQSSAENALSYLETHQVDIAIVDVMMGKMSGFELCKILKEDFDIPVIMLTARDALSDKEQAYLTGTDDYVTKPFEVKELMFRIKAVLKRYNVNINNEVSIGNLTLNQSYLEIQSSSKSMNLPNKEFQLLFLLASNPRQVFNRDALIEKIWGFDYEGDERTVDVHIKRLRKRLEKIDASVTIHTVRGLGYKVDDHV.

The region spanning 3-116 is the Response regulatory domain; that stretch reads TCLIVDDDPK…ELMFRIKAVL (114 aa). Residue Asp52 is modified to 4-aspartylphosphate. Residues 124–222 constitute a DNA-binding region (ompR/PhoB-type); it reads NNEVSIGNLT…VRGLGYKVDD (99 aa).

Phosphorylated by HssS.

It localises to the cytoplasm. Member of the two-component regulatory system HssS/HssR involved in intracellular heme homeostasis and tempering of staphylococcal virulence. Phosphorylated HssR binds to a direct repeat sequence within hrtAB promoter and activates the expression of hrtAB, an efflux pump, in response to extracellular heme, hemin, hemoglobin or blood. In Staphylococcus saprophyticus subsp. saprophyticus (strain ATCC 15305 / DSM 20229 / NCIMB 8711 / NCTC 7292 / S-41), this protein is Heme response regulator HssR (hssR).